The primary structure comprises 325 residues: NADH-quinone oxidoreductase subunit H (325 aa).

Transmembrane regions (helical) follow at residues 11–31 (ILLT…CGAF), 50–69 (SRVG…KMFF), 81–101 (LIFT…FAIV), 114–134 (IGIL…LFAG), 154–174 (LSYE…AGSF), 186–206 (LWNI…GVAV), 237–257 (FFVG…TLFF), 265–285 (LPPF…FILV), and 304–324 (ICLP…LYHA).

This sequence belongs to the complex I subunit 1 family. NDH-1 is composed of 13 different subunits. Subunits NuoA, H, J, K, L, M, N constitute the membrane sector of the complex.

It localises to the cell inner membrane. The enzyme catalyses a quinone + NADH + 5 H(+)(in) = a quinol + NAD(+) + 4 H(+)(out). Its function is as follows. NDH-1 shuttles electrons from NADH, via FMN and iron-sulfur (Fe-S) centers, to quinones in the respiratory chain. The immediate electron acceptor for the enzyme in this species is believed to be ubiquinone. Couples the redox reaction to proton translocation (for every two electrons transferred, four hydrogen ions are translocated across the cytoplasmic membrane), and thus conserves the redox energy in a proton gradient. This subunit may bind ubiquinone. The sequence is that of NADH-quinone oxidoreductase subunit H from Edwardsiella ictaluri (strain 93-146).